The following is an 823-amino-acid chain: Bifunctional enzyme flvA (823 aa).

The segment at T56–I535 is pyridoxal 5'-phosphate-dependent lyase. An N6-(pyridoxal phosphate)lysine modification is found at K331. Positions D573 to L823 are alpha-ketoglutarate-dependent oxygenase. Fe cation-binding residues include H703 and D705.

The protein in the N-terminal section; belongs to the trans-sulfuration enzymes family. It in the C-terminal section; belongs to the iron/ascorbate-dependent oxidoreductase family. Pyridoxal 5'-phosphate serves as cofactor. Fe(2+) is required as a cofactor.

The enzyme catalyses O-acetyl-L-homoserine + 3-methyl-2-oxobutanoate = (6S)-6-amino-3,3-dimethyl-2-oxoheptanedioate + acetate + H(+). The catalysed reaction is (6S)-3,3-dimethylpiperidine-2,6-dicarboxylate + 2-oxoglutarate + AH2 + O2 + H(+) = (2S)-5,5-dimethylpiperidine-2-carboxylate + succinate + A + 2 CO2 + H2O. It participates in secondary metabolite biosynthesis; terpenoid biosynthesis. Functionally, bifunctional enzyme; part of the gene cluster that mediates the biosynthesis of flavunoidine, an alkaloidal terpenoid with a tetracyclic cage-like core connected to dimethylcadaverine via a C-N bond and acylated with 5,5-dimethyl-L-pipecolate. The tetracyclic core is synthesized by the terpene cyclase flvE and the cytochrome P450 monooxygenase flvD. The terpene cyclase flvE catalyzes the cyclization of farnesyl pyrophosphate (FPP) to form (1R,4R,5S)-(+)-acoradiene and the cytochrome P450 monooxygenase flvD is then responsible for oxidative conversion of (1R,4R,5S)-(+)-acoradiene into the tetracyclic cage present in the final product flavunoidine. In parallel, the N-methyltransferase flvH dimethylates L-lysine to give N,N-dimethyl-L-Lysin which is decarboxylated by flvG to afford dimethylcadaverine. The terpene cyclase-like protein flvF is the enzyme that attaches the dimethylcadaverine precusor at the C-7 of the tetracyclic cage to yield pre-flavunoidine. The cytochrome monooxygenase flvC hydroxylates the C-10 position of pre-flavunoidine whereas the NRPS flvI acylates the terpenoid core at the hydroxylated C-10 with dimethylpipecolate to yield final flavunoidine. The bifunctional enzyme flvA and the dehydrogenase flvB are responsible for the synthesis of the dimethylpipecolate precursor. The PLP-dependent lyase domain of flvA might use L-O-acetyl-homoserine and alpha-keto-isovalerate to form an intermediary ketone that can cyclize intramolecularly to yield an imine. The imine can be reduced by flvB to yield the 6-carboxylated pipecolate. The C-terminal alpha-KG-dependent oxygenase domain of flvA is then proposed to catalyze the decarboxylation to yield dimethylpipecolate. The chain is Bifunctional enzyme flvA from Aspergillus flavus (strain ATCC 200026 / FGSC A1120 / IAM 13836 / NRRL 3357 / JCM 12722 / SRRC 167).